Reading from the N-terminus, the 265-residue chain is MLIWSPKGRAAAGVVASVLFIVFFFLPLAVILMSSLSQQWNGILPSGFTLNHFVNALHGAAWDALLASLTIGFCASLFALLCGVWAALALRQYGVKTQKWLSMVFYLPSAIPSVSVGLGILVAFSQGPLQMNGTLWIVLTAHFVLISAFTFSNVSTGLARISADIENVASSLGASPWYRLRHVTLPLLMPWMMSALALSLSLSMGELGATMMIYPPGWTTLPVAIFSLTDRGNIADGAALTIVLVAITLLLMMKLERIAKRLGQK.

The next 6 helical transmembrane spans lie at 13–33 (GVVA…VILM), 69–89 (LTIG…AALA), 104–124 (VFYL…LVAF), 131–151 (MNGT…AFTF), 185–205 (LPLL…LSMG), and 233–253 (NIAD…LLMM). Residues 65 to 253 (LLASLTIGFC…LVAITLLLMM (189 aa)) enclose the ABC transmembrane type-1 domain.

It belongs to the binding-protein-dependent transport system permease family.

The protein resides in the cell inner membrane. Its function is as follows. Probably part of the PhnSTUV complex (TC 3.A.1.11.5) involved in 2-aminoethylphosphonate import. Probably responsible for the translocation of the substrate across the membrane. The chain is Putative 2-aminoethylphosphonate transport system permease protein PhnV (phnV) from Salmonella typhimurium (strain LT2 / SGSC1412 / ATCC 700720).